We begin with the raw amino-acid sequence, 276 residues long: Diaminopimelate epimerase (276 aa).

Positions 13, 46, and 66 each coordinate substrate. Cys-75 serves as the catalytic Proton donor. Residues Gly-76–Asn-77, Asn-159, Asn-192, and Glu-210–Arg-211 each bind substrate. Residue Cys-219 is the Proton acceptor of the active site. Substrate is bound at residue Gly-220–Thr-221.

Belongs to the diaminopimelate epimerase family. In terms of assembly, homodimer.

It localises to the cytoplasm. It catalyses the reaction (2S,6S)-2,6-diaminopimelate = meso-2,6-diaminopimelate. The protein operates within amino-acid biosynthesis; L-lysine biosynthesis via DAP pathway; DL-2,6-diaminopimelate from LL-2,6-diaminopimelate: step 1/1. Catalyzes the stereoinversion of LL-2,6-diaminopimelate (L,L-DAP) to meso-diaminopimelate (meso-DAP), a precursor of L-lysine and an essential component of the bacterial peptidoglycan. This is Diaminopimelate epimerase from Hahella chejuensis (strain KCTC 2396).